Here is a 272-residue protein sequence, read N- to C-terminus: Acyl-[acyl-carrier-protein]--UDP-N-acetylglucosamine O-acyltransferase (272 aa).

It belongs to the transferase hexapeptide repeat family. LpxA subfamily. In terms of assembly, homotrimer.

It localises to the cytoplasm. The catalysed reaction is a (3R)-hydroxyacyl-[ACP] + UDP-N-acetyl-alpha-D-glucosamine = a UDP-3-O-[(3R)-3-hydroxyacyl]-N-acetyl-alpha-D-glucosamine + holo-[ACP]. It participates in glycolipid biosynthesis; lipid IV(A) biosynthesis; lipid IV(A) from (3R)-3-hydroxytetradecanoyl-[acyl-carrier-protein] and UDP-N-acetyl-alpha-D-glucosamine: step 1/6. Involved in the biosynthesis of lipid A, a phosphorylated glycolipid that anchors the lipopolysaccharide to the outer membrane of the cell. The polypeptide is Acyl-[acyl-carrier-protein]--UDP-N-acetylglucosamine O-acyltransferase (Rhizobium etli (strain ATCC 51251 / DSM 11541 / JCM 21823 / NBRC 15573 / CFN 42)).